Reading from the N-terminus, the 484-residue chain is Zinc metalloproteinase-disintegrin jerdonitin (484 aa).

The N-terminal stretch at 1 to 20 is a signal peptide; it reads MIQVLLVTICLAVFPYQGSS. Residues 21–191 constitute a propeptide that is removed on maturation; that stretch reads IILESGNIDD…KLSQIMIPPE (171 aa). The residue at position 192 (Gln-192) is a Pyrrolidone carboxylic acid. The region spanning 194–392 is the Peptidase M12B domain; sequence RYIELVIVAD…FTSRCLYNEP (199 aa). Glu-197 and Asp-281 together coordinate Ca(2+). 3 disulfides stabilise this stretch: Cys-305–Cys-387, Cys-345–Cys-369, and Cys-347–Cys-352. His-330 is a Zn(2+) binding site. Glu-331 is an active-site residue. 2 residues coordinate Zn(2+): His-334 and His-340. Ca(2+)-binding residues include Cys-387, Asn-390, Val-402, Asn-405, Glu-409, Glu-412, and Asp-415. The 85-residue stretch at 400 to 484 folds into the Disintegrin domain; sequence PSVCGNYYME…AGCPRNPFHA (85 aa). Cystine bridges form between Cys-403–Cys-422, Cys-414–Cys-432, Cys-416–Cys-427, Cys-426–Cys-449, Cys-440–Cys-446, Cys-445–Cys-470, and Cys-458–Cys-477. The Cell attachment site motif lies at 462 to 464; that stretch reads RGD.

This sequence belongs to the venom metalloproteinase (M12B) family. P-II subfamily. P-IIb sub-subfamily. In terms of assembly, monomer. Zn(2+) serves as cofactor. The N-terminus is blocked. In terms of tissue distribution, expressed by the venom gland.

It is found in the secreted. Its activity is regulated as follows. Fibrinogenolytic activity is completely inhibited by EDTA, but not by PMSF. In terms of biological role, snake venom zinc metalloproteinase that inhibits ADP-induced human platelet aggregation (IC(50)=120 nM (native) and IC(50)=248 nM (recombinant)). May act by binding to the receptor GPIIb/GPIIIa (ITGA2B/ITGB3) on the platelet surface. Degrades the alpha-chain of fibrinogen completely and the beta-chain partially, leaving the gamma chain intact. Also inhibits the growth of several cell lines, including human liver cancer cells (Bel7402), human leukemia cells (K562) and human gastric carcinoma cells (BGC823). The chain is Zinc metalloproteinase-disintegrin jerdonitin from Protobothrops jerdonii (Jerdon's pitviper).